The sequence spans 587 residues: Potassium-transporting ATPase potassium-binding subunit (587 aa).

A run of 4 helical transmembrane segments spans residues 1-21 (MSTS…LWVT), 60-80 (PVYA…LYLL), 89-109 (LNLG…VSFM), and 131-151 (GLAV…IAVV). Residues 162-188 (AVGGPGGPNGPGGPGGPNGPGAGSRDD) are disordered. Over residues 164 to 183 (GGPGGPNGPGGPGGPNGPGA) the composition is skewed to gly residues. Helical transmembrane passes span 208 to 228 (IRIL…GGAI), 280 to 300 (PTSW…FSLP), 314 to 334 (LAIV…NAAF), 409 to 429 (GLYG…LMIG), 449 to 469 (LYFL…MGLP), 514 to 534 (ALGL…LGMA), and 557 to 577 (FAGM…FPAL).

It belongs to the KdpA family. As to quaternary structure, the system is composed of three essential subunits: KdpA, KdpB and KdpC.

It is found in the cell membrane. Functionally, part of the high-affinity ATP-driven potassium transport (or Kdp) system, which catalyzes the hydrolysis of ATP coupled with the electrogenic transport of potassium into the cytoplasm. This subunit binds the extracellular potassium ions and delivers the ions to the membrane domain of KdpB through an intramembrane tunnel. The protein is Potassium-transporting ATPase potassium-binding subunit of Frankia alni (strain DSM 45986 / CECT 9034 / ACN14a).